Consider the following 126-residue polypeptide: Ribonuclease P protein component (126 aa).

It belongs to the RnpA family. In terms of assembly, consists of a catalytic RNA component (M1 or rnpB) and a protein subunit.

The enzyme catalyses Endonucleolytic cleavage of RNA, removing 5'-extranucleotides from tRNA precursor.. Its function is as follows. RNaseP catalyzes the removal of the 5'-leader sequence from pre-tRNA to produce the mature 5'-terminus. It can also cleave other RNA substrates such as 4.5S RNA. The protein component plays an auxiliary but essential role in vivo by binding to the 5'-leader sequence and broadening the substrate specificity of the ribozyme. The sequence is that of Ribonuclease P protein component from Synechococcus sp. (strain JA-3-3Ab) (Cyanobacteria bacterium Yellowstone A-Prime).